Consider the following 254-residue polypeptide: Nickel import ATP-binding protein NikD (254 aa).

The ABC transporter domain occupies 2–241 (PQQIELRDIA…PKHAVTRSLV (240 aa)). 36–43 (GGSGSGKS) contributes to the ATP binding site.

Belongs to the ABC transporter superfamily. Nickel importer (TC 3.A.1.5.3) family. The complex is composed of two ATP-binding proteins (NikD and NikE), two transmembrane proteins (NikB and NikC) and a solute-binding protein (NikA).

It localises to the cell inner membrane. The enzyme catalyses Ni(2+)(out) + ATP + H2O = Ni(2+)(in) + ADP + phosphate + H(+). Its function is as follows. Part of the ABC transporter complex NikABCDE involved in nickel import. Responsible for energy coupling to the transport system. The chain is Nickel import ATP-binding protein NikD from Shigella dysenteriae serotype 1 (strain Sd197).